The primary structure comprises 546 residues: MAAKEIIFSDVARSKLVEGVNILANAVKVTLGPKGRNVVLERSFGSPVVTKDGVSVAKEIELPDRVQNIGAQLVKEVASRTSDAAGDGTTTATVLAQAIVREGQKYVAAGLNPLDLKRGIDKAVVAAIDELKKISKPTTTSKEIAQVATISANGEESIGQRIAEAIDRVGKEGVITVEDGKSLDDELDVVEGLQFDRGYLSPYFINDQDKQVAVLDNPYVLLHDKKVSNIRDLLPVLEQVAKASRPLLIIAEDVEGEALATLVVNNIRGILKTVAVKAPGFGDRRKALLEDIAILTGGQVIAEETGLTLEKATLAELGQAKRIEVGKENTTVIDGAGEHKNIEARVKQIRAQIDEASSDYDREKLQERVAKLAGGVAVIKVGGATEIEVKEKKDRVDDALHATRAAVEEGIVPGGGVALIRVRNAISGLKGANADQDAGIKIVLRALEEPLRQIVTNAGEEASVVVAKVAEGSGNFGYNAQTGEYGDLVESGVLDPTKVTRTALQNAASVAALLLTTDATVYEAPKDPAPATSAAGPGAPGAGYDF.

ATP-binding positions include 30–33, K51, 87–91, G415, and D495; these read TLGP and DGTTT.

Belongs to the chaperonin (HSP60) family. Forms a cylinder of 14 subunits composed of two heptameric rings stacked back-to-back. Interacts with the co-chaperonin GroES.

It is found in the cytoplasm. The enzyme catalyses ATP + H2O + a folded polypeptide = ADP + phosphate + an unfolded polypeptide.. Together with its co-chaperonin GroES, plays an essential role in assisting protein folding. The GroEL-GroES system forms a nano-cage that allows encapsulation of the non-native substrate proteins and provides a physical environment optimized to promote and accelerate protein folding. This is Chaperonin GroEL 5 from Paraburkholderia xenovorans (strain LB400).